The chain runs to 939 residues: U3 small nucleolar RNA-associated protein 21 (939 aa).

Serine 2 bears the N-acetylserine mark. 14 WD repeats span residues 40–71 (ATGT…LLFV), 81–111 (VALS…HLLE), 119–158 (EHLC…TKLT), 168–201 (VSLQ…LVFT), 208–245 (QITT…RTIK), 252–287 (SSLS…IHVL), 295–347 (YGGV…RSRG), 354–388 (SYIA…QSQE), 415–454 (VALA…GRWT), 463–497 (VKSV…LRKK), 505–541 (VTGI…GKLK), 546–581 (ITAM…VRQL), 583–624 (GHSN…DGII), and 626–664 (DNVA…KTVS). Serine 772 is subject to Phosphoserine.

In terms of assembly, interacts with snoRNA U3. Interacts with MPP10. Interacts (via WD repeats) with UTP18. Component of the ribosomal small subunit (SSU) processome composed of at least 40 protein subunits and snoRNA U3.

The protein localises to the nucleus. It localises to the nucleolus. Its function is as follows. Involved in nucleolar processing of pre-18S ribosomal RNA and ribosome assembly. The polypeptide is U3 small nucleolar RNA-associated protein 21 (UTP21) (Saccharomyces cerevisiae (strain ATCC 204508 / S288c) (Baker's yeast)).